Consider the following 323-residue polypeptide: Acetyl esterase (323 aa).

The Involved in the stabilization of the negatively charged intermediate by the formation of the oxyanion hole motif lies at 91 to 93 (HGG). Catalysis depends on residues S165, D262, and H292.

This sequence belongs to the 'GDXG' lipolytic enzyme family. In terms of assembly, homodimer. Interacts with MalT and MelA.

It is found in the cytoplasm. Its function is as follows. Displays esterase activity towards short chain fatty esters (acyl chain length of up to 8 carbons). Able to hydrolyze triacetylglycerol (triacetin) and tributyrylglycerol (tributyrin), but not trioleylglycerol (triolein) or cholesterol oleate. Negatively regulates MalT activity by antagonizing maltotriose binding. Inhibits MelA galactosidase activity. This Salmonella paratyphi A (strain ATCC 9150 / SARB42) protein is Acetyl esterase.